Consider the following 63-residue polypeptide: Large ribosomal subunit protein bL33 (63 aa).

Belongs to the bacterial ribosomal protein bL33 family.

This Gloeobacter violaceus (strain ATCC 29082 / PCC 7421) protein is Large ribosomal subunit protein bL33.